The sequence spans 1113 residues: MDPCGDPAVPGGDCPQTRGPGLQGASGQEGPLQGTCVDSSHSEHEDRNRMSEELIMVVQEMKKYFPAERHTKPSTLDALNYALRCVHSVQANSDFFQSLGPRGAHQADVTVYSLEDLTALASEHTSKNTDTFAAVFSFLSGRLVHISEQAALILNSKRGFLKSVHFVDLLAPQDVRAFYAHTAPTQLPFWNNWTQRASQYECAPAKPFFCRICGGGDREKRHYSPFRILPYLVHVHSSAQPEPEPCCLTLVEKIHSGYEAPRIPVDKRIFTTTHTPGCVFLEVDERAVPLLGYLPQDLIGTSILTYLHPEDRPLMVAIHQKVLKYAGHPPFEHSPVRFCTQNGEYVILDSSWSSFVNPWSRKVSFIIGRHKVRTSPLNEDVFATRIKKAASNDKDIAELQEQIHKLLLQPVHASASSGYGSLGSSGSQEQHVSITSSSESSGHCPEEGQHEQMTLQQVYASVNKIKNVGQQLYIESMARSSVKPVAETCVEPQGGDEQKDFSSSQTLKNKSTTDTGSGGNLQQEQPSSSYQQMNCIDSVIRYLTSYSLPALKRKCISCTNTSSSSEEAKPIPEVDSSQRDTEQLLDIRKQETTGPSTDIEGGAARTLSTAALSVASGISQCSCSSTSGHAPPLQSESVAVACKPWALRTKASHLAAGGFKHVGLTAAVLSAHTQKEEQNYVDRFREKILTSPYGCYLQQESRNRAQYSCVQAGSTAKHSRCAGSERQKHKRKKLPAPVDTSSPGAHLCPHVTGLLPDEQHWGPSASPSPLGAGLAFPSALVVPSQTPYLLPSFPLQDMASQGVGVSAAWGAAAGCPPLSAGPQAVAAFPSAYVDTLMTIFLHNAPLFPLWPPSFSPYPSLGAAGSSELAPLVPAMAPNPEPTTSGHSQRRVEENWEAHSEELPFISSRSSSPLQLNLLQEEMPAPSESADAVRRGAGPDAKHHCVTGPSGSRSRHCTSGELATATAQQESAAASGSSASSIYFSSTDYASEVSENRQRPQDRQRDEALPGAAEESIWRMIERTPECVLMTYQVPERGREEVLKQDLEKLQSMEQQQPLFSPAQREELAKVRSWIHSHTAPQEGHLQSCVACEDRGSVGDTAEVLEQHPAEDTS.

Residues 1 to 48 (MDPCGDPAVPGGDCPQTRGPGLQGASGQEGPLQGTCVDSSHSEHEDRN) are disordered. A Nuclear export signal 1 motif is present at residues 54–63 (LIMVVQEMKK). 2 consecutive PAS domains span residues 120-187 (LASE…PTQL) and 258-324 (YEAP…KVLK). A PAC domain is found at 333–376 (HSPVRFCTQNGEYVILDSSWSSFVNPWSRKVSFIIGRHKVRTSP). Positions 399 to 408 (LQEQIHKLLL) match the Nuclear export signal 3 motif. Low complexity predominate over residues 418–427 (GYGSLGSSGS). Disordered stretches follow at residues 418 to 451 (GYGS…GQHE), 485 to 530 (VAET…SSSY), 561 to 580 (TSSS…SQRD), 718 to 742 (HSRC…DTSS), and 871 to 906 (LVPA…PFIS). 2 stretches are compositionally biased toward polar residues: residues 428–441 (QEQH…SESS) and 501–530 (FSSS…SSSY). The CSNK1E binding domain stretch occupies residues 551–750 (LKRKCISCTN…SSPGAHLCPH (200 aa)). The segment covering 566-580 (EEAKPIPEVDSSQRD) has biased composition (basic and acidic residues). The Nuclear localization signal motif lies at 719-735 (SRCAGSERQKHKRKKLP). Residues 889–901 (RRVEENWEAHSEE) are compositionally biased toward basic and acidic residues. Ser-907 carries the post-translational modification Phosphoserine. A Nuclear export signal 2 motif is present at residues 913–920 (LQLNLLQE). The interval 921–1010 (EMPAPSESAD…DRQRDEALPG (90 aa)) is disordered. The span at 962 to 986 (ATATAQQESAAASGSSASSIYFSST) shows a compositional bias: low complexity. Residues 993–1007 (SENRQRPQDRQRDEA) are compositionally biased toward basic and acidic residues. The interval 1035 to 1113 (ERGREEVLKQ…LEQHPAEDTS (79 aa)) is CRY binding domain.

As to quaternary structure, homodimer. Component of the circadian core oscillator, which includes the CRY proteins, CLOCK or NPAS2, BMAL1 or BMAL2, CSNK1D and/or CSNK1E, TIMELESS and the PER proteins. Interacts directly with PER1, PER2, CRY1, CRY2, and TIMELESS; interaction with CRY1 and CRY2 is weak and not rhythmic. Interacts with FBXW11 and BTRC. Phosphorylation by CSNK1E is weak and appears to require association with PER1 and translocation to the nucleus. Post-translationally, ubiquitinated. Widely expressed. Expressed in heart, brain, lung, liver, skeletal muscle, testis, and at low level in the spleen and kidney. In brain, mainly found in the SCN, hippocampus, piriform cortex, and cerebellum. Lower level of expression in the neocortex. Expression exhibits synchronous oscillations in liver, skeletal muscle and testis.

It localises to the cytoplasm. It is found in the nucleus. Originally described as a core component of the circadian clock. The circadian clock, an internal time-keeping system, regulates various physiological processes through the generation of approximately 24 hour circadian rhythms in gene expression, which are translated into rhythms in metabolism and behavior. It is derived from the Latin roots 'circa' (about) and 'diem' (day) and acts as an important regulator of a wide array of physiological functions including metabolism, sleep, body temperature, blood pressure, endocrine, immune, cardiovascular, and renal function. Consists of two major components: the central clock, residing in the suprachiasmatic nucleus (SCN) of the brain, and the peripheral clocks that are present in nearly every tissue and organ system. Both the central and peripheral clocks can be reset by environmental cues, also known as Zeitgebers (German for 'timegivers'). The predominant Zeitgeber for the central clock is light, which is sensed by retina and signals directly to the SCN. The central clock entrains the peripheral clocks through neuronal and hormonal signals, body temperature and feeding-related cues, aligning all clocks with the external light/dark cycle. Circadian rhythms allow an organism to achieve temporal homeostasis with its environment at the molecular level by regulating gene expression to create a peak of protein expression once every 24 hours to control when a particular physiological process is most active with respect to the solar day. Transcription and translation of core clock components (CLOCK, NPAS2, BMAL1, BMAL2, PER1, PER2, PER3, CRY1 and CRY2) plays a critical role in rhythm generation, whereas delays imposed by post-translational modifications (PTMs) are important for determining the period (tau) of the rhythms (tau refers to the period of a rhythm and is the length, in time, of one complete cycle). A diurnal rhythm is synchronized with the day/night cycle, while the ultradian and infradian rhythms have a period shorter and longer than 24 hours, respectively. Disruptions in the circadian rhythms contribute to the pathology of cardiovascular diseases, cancer, metabolic syndromes and aging. A transcription/translation feedback loop (TTFL) forms the core of the molecular circadian clock mechanism. Transcription factors, CLOCK or NPAS2 and BMAL1 or BMAL2, form the positive limb of the feedback loop, act in the form of a heterodimer and activate the transcription of core clock genes and clock-controlled genes (involved in key metabolic processes), harboring E-box elements (5'-CACGTG-3') within their promoters. The core clock genes: PER1/2/3 and CRY1/2 which are transcriptional repressors form the negative limb of the feedback loop and interact with the CLOCK|NPAS2-BMAL1|BMAL2 heterodimer inhibiting its activity and thereby negatively regulating their own expression. This heterodimer also activates nuclear receptors NR1D1, NR1D2, RORA, RORB and RORG, which form a second feedback loop and which activate and repress BMAL1 transcription, respectively. Has a redundant role with the other PER proteins PER1 and PER2 and is not essential for the circadian rhythms maintenance. In contrast, plays an important role in sleep-wake timing and sleep homeostasis probably through the transcriptional regulation of sleep homeostasis-related genes, without influencing circadian parameters. Can bind heme. In Mus musculus (Mouse), this protein is Period circadian protein homolog 3 (Per3).